A 307-amino-acid chain; its full sequence is Elongation factor Ts (307 aa).

Positions 82–85 (TDFV) are involved in Mg(2+) ion dislocation from EF-Tu.

The protein belongs to the EF-Ts family.

The protein localises to the cytoplasm. Functionally, associates with the EF-Tu.GDP complex and induces the exchange of GDP to GTP. It remains bound to the aminoacyl-tRNA.EF-Tu.GTP complex up to the GTP hydrolysis stage on the ribosome. The polypeptide is Elongation factor Ts (Nautilia profundicola (strain ATCC BAA-1463 / DSM 18972 / AmH)).